Consider the following 284-residue polypeptide: Tropomyosin Per a 7.0101 (284 aa).

The stretch at 22–266 (ALLCEQQARD…EDELVHEKEK (245 aa)) forms a coiled coil.

Belongs to the tropomyosin family. As to quaternary structure, homodimer.

Tropomyosin, in association with the troponin complex, plays a central role in the calcium dependent regulation of muscle contraction. In Periplaneta americana (American cockroach), this protein is Tropomyosin Per a 7.0101.